Here is a 60-residue protein sequence, read N- to C-terminus: Beta-toxin BotIT2 (60 aa).

The LCN-type CS-alpha/beta domain occupies 1-60; the sequence is DGYIKGYKGCKITCVINDDYCDTECKAEGGTYGYCWKWGLACWCEDLPDEKRWKSETNTC. 4 disulfide bridges follow: Cys10/Cys60, Cys14/Cys35, Cys21/Cys42, and Cys25/Cys44.

Belongs to the long (4 C-C) scorpion toxin superfamily. Sodium channel inhibitor family. Beta subfamily. In terms of tissue distribution, expressed by the venom gland.

The protein resides in the secreted. Its function is as follows. Beta toxins bind voltage-independently at site-4 of sodium channels (Nav) and shift the voltage of activation toward more negative potentials thereby affecting sodium channel activation and promoting spontaneous and repetitive firing. This toxin specifically acts by inducing a new current with very slow activation/deactivation kinetics due to the transformation of normal fast channels into slow ones. It possess properties of excitatory and depressant toxins. It is highly active on insects and less active on mammals. This chain is Beta-toxin BotIT2, found in Buthus occitanus tunetanus (Common European scorpion).